The primary structure comprises 1136 residues: MAKKEVKSSLLDNMIGVGDTVLLEPLNEETFIDNLKKRFDHNEIYTYIGSVVISVNPYRSLPIYSPEKVEDYRNRNFYELSPHIFALSDEAYRSLRDQDKDQCILITGESGAGKTEASKLVMSYVAAVCGKGAEVNQVKEQLLQSTPVLEAFGNAKTVRNDNSSRFGKYMDIEFDFKGDPLGGVISNYLLEKSRVVKQPRGERNFHVFYQLLSGASEELLHKLKLERDFSRYNYLSLDSAKVNGVDDAANFRTVRNAMQIVGFSDPEAESVLEVVAAVLKLGNIEFKPESRMNGLDESKIKDKNELKEICELTSIDQVVLERAFSFRTVEAKQEKVSTTLNVAQAYYARDALAKNLYSRLFSWLVNRINESIKAQTKVRKKVMGVLDIYGFEIFEDNSFEQFIINYCNEKLQQIFIELTLKEEQEEYIREDIEWTHIDYFNNAIICDLIENNTNGILAMLDEECLRPGTVTDETFLEKLNQVCATHQHFESRMSKCSRFLNDTTLPHSCFRIQHYAGKVLYQVEGFVDKNNDLLYRDLSQAMWKAGHALIKSLFPEGNPAKVNLKRPPTAGSQFKASVATLMKNLQTKNPNYIRCIKPNDKKAAHIFSESLVCHQIRYLGLLENVRVRRAGYAFRQAYEPCLERYKMLCKQTWPHWKGPARSGVEVLFNELEIPVEEYSFGRSKIFIRNPRTLFQLEDLRKQRLEDLATLIQKIYRGWKCRTHFLLMKRSQVVIAAWYRRYAQQKRYQQIKSSALVIQSYIRGWKARKILRELKHQKRCKEAATTIAAYWHGTQARKERRRLKDEARNKHAIAVIWAFWLGSKARRELKRLKEEARRKHAVAVIWAYWLGLKVRREYRKFFRANAGKKIYEFTLQRIVQKYLLEMKNKMPSLSPIDKNWPSRPYLFLDSTHKELKRIFHLWRCKKYRDQFTDQQKLIYEEKLEASELFKDKKALYPSSVGQPFQGAYLEINKNPKYKKLKDAIEEKIIIAEVVNKINRANGKSTSRIFLLTNNNLLLADQKSGQIKSEVPLVDVTKVSMSSQNDGFFAVHLKEGSEAASKGDFLFSSDHLIEMATKLYRTTLSQTKQKLNIEISDEFLVQFRQDKVCVKFIQGNQKNGSVPTCKRKNNRLLEVAVP.

Residues 15–701 (IGVGDTVLLE…TLFQLEDLRK (687 aa)) form the Myosin motor domain. Ser-60 bears the Phosphoserine mark. Residue 108-115 (GESGAGKT) coordinates ATP. Lys-287 participates in a covalent cross-link: Glycyl lysine isopeptide (Lys-Gly) (interchain with G-Cter in SUMO1); alternate. A Glycyl lysine isopeptide (Lys-Gly) (interchain with G-Cter in SUMO2); alternate cross-link involves residue Lys-287. An actin-binding region spans residues 592–599 (YIRCIKPN). IQ domains follow at residues 704–729 (LEDLATLIQKIYRGWKCRTHFLLMKR), 730–750 (SQVVIAAWYRRYAQQKRYQQI), 750–778 (IKSSALVIQSYIRGWKARKILRELKHQKR), 780–807 (KEAATTIAAYWHGTQARKERRRLKDEAR), 808–837 (NKHAIAVIWAFWLGSKARRELKRLKEEARR), and 837–866 (RKHAVAVIWAYWLGLKVRREYRKFFRANAG). The TH1 domain occupies 952 to 1136 (KALYPSSVGQ…NNRLLEVAVP (185 aa)).

The protein belongs to the TRAFAC class myosin-kinesin ATPase superfamily. Myosin family.

Motor protein that may participate in process critical to neuronal development and function such as cell migration, neurite outgrowth and vesicular transport. This chain is Unconventional myosin-Ib (Myo1b), found in Rattus norvegicus (Rat).